The sequence spans 269 residues: tRNA pseudouridine synthase A (269 aa).

The active-site Nucleophile is the Asp-51. Tyr-109 contributes to the substrate binding site.

Belongs to the tRNA pseudouridine synthase TruA family. As to quaternary structure, homodimer.

The enzyme catalyses uridine(38/39/40) in tRNA = pseudouridine(38/39/40) in tRNA. Formation of pseudouridine at positions 38, 39 and 40 in the anticodon stem and loop of transfer RNAs. In Haemophilus influenzae (strain 86-028NP), this protein is tRNA pseudouridine synthase A.